We begin with the raw amino-acid sequence, 205 residues long: Urease accessory protein UreG (205 aa).

11-18 (GPVGSGKT) is a binding site for GTP.

This sequence belongs to the SIMIBI class G3E GTPase family. UreG subfamily. In terms of assembly, homodimer. UreD, UreF and UreG form a complex that acts as a GTP-hydrolysis-dependent molecular chaperone, activating the urease apoprotein by helping to assemble the nickel containing metallocenter of UreC. The UreE protein probably delivers the nickel.

It localises to the cytoplasm. In terms of biological role, facilitates the functional incorporation of the urease nickel metallocenter. This process requires GTP hydrolysis, probably effectuated by UreG. This is Urease accessory protein UreG from Prochlorococcus marinus (strain NATL2A).